The primary structure comprises 258 residues: Bidirectional sugar transporter SWEET7 (258 aa).

Over 1 to 11 (MVFAHLNLLRK) the chain is Extracellular. The helical transmembrane segment at 12–32 (IVGIIGNFIALCLFLSPTPTF) threads the bilayer. A MtN3/slv 1 domain is found at 12–100 (IVGIIGNFIA…IFFVYCGRQK (89 aa)). The Cytoplasmic portion of the chain corresponds to 33-46 (VRIVKKKSVEEYSP). Residues 47–67 (IPYLATLINCLVWVLYGLPTV) form a helical membrane-spanning segment. The Extracellular segment spans residues 68–73 (HPDSTL). The chain crosses the membrane as a helical span at residues 74–94 (VITINGTGILIEIVFLTIFFV). Over 95–102 (YCGRQKQR) the chain is Cytoplasmic. Residues 103 to 123 (LIISAVIAAETAFIAILAVLV) traverse the membrane as a helical segment. The Extracellular segment spans residues 124 to 134 (LTLQHTTEKRT). Residues 135 to 155 (MSVGIVCCVFNVMMYASPLSV) form a helical membrane-spanning segment. In terms of domain architecture, MtN3/slv 2 spans 136-221 (SVGIVCCVFN…LYGAYYKSTK (86 aa)). The Cytoplasmic segment spans residues 156–166 (MKMVIKTKSVE). The helical transmembrane segment at 167 to 187 (FMPFWLSVAGFLNAGVWTIYA) threads the bilayer. The Extracellular segment spans residues 188–193 (LMPFDP). The chain crosses the membrane as a helical span at residues 194–214 (FMAIPNGIGCLFGLAQLILYG). The Cytoplasmic segment spans residues 215-258 (AYYKSTKRIMAERENQPGYVGLSSAIARTGSEKTANTNQEPNNV).

The protein belongs to the SWEET sugar transporter family. Forms heterooligomers with SWEET8, SWEET11, SWEET13, SWEET16 and SWEET17.

It is found in the cell membrane. Functionally, mediates both low-affinity uptake and efflux of sugar across the plasma membrane. The sequence is that of Bidirectional sugar transporter SWEET7 from Arabidopsis thaliana (Mouse-ear cress).